Here is a 184-residue protein sequence, read N- to C-terminus: Inactive ribonuclease-like protein 9 (184 aa).

An N-terminal signal peptide occupies residues 1–25 (MKPLVIKFAWPLPLLLLLLLPPKLQ). Intrachain disulfides connect Cys-93–Cys-148, Cys-111–Cys-163, and Cys-118–Cys-125. Residues Asn-147 and Asn-179 are each glycosylated (N-linked (GlcNAc...) asparagine).

It belongs to the pancreatic ribonuclease family.

The protein resides in the secreted. Its function is as follows. Does not exhibit any ribonuclease activity. This Mus musculus (Mouse) protein is Inactive ribonuclease-like protein 9 (Rnase9).